Here is a 334-residue protein sequence, read N- to C-terminus: Protein-methionine-sulfoxide reductase catalytic subunit MsrP (334 aa).

A signal peptide (tat-type signal) is located at residues 1 to 44; that stretch reads MKKNQFLKESDVTAESVFFMKRRQVLKALGISAAALSLPHAAHA. Mo-molybdopterin is bound by residues N88, 91–92, C146, T181, N233, R238, and 249–251; these read YE and GIK.

The protein belongs to the MsrP family. As to quaternary structure, heterodimer of a catalytic subunit (MsrP) and a heme-binding subunit (MsrQ). Mo-molybdopterin serves as cofactor. In terms of processing, predicted to be exported by the Tat system. The position of the signal peptide cleavage has not been experimentally proven.

The protein localises to the periplasm. The enzyme catalyses L-methionyl-[protein] + a quinone + H2O = L-methionyl-(S)-S-oxide-[protein] + a quinol. It catalyses the reaction L-methionyl-[protein] + a quinone + H2O = L-methionyl-(R)-S-oxide-[protein] + a quinol. Its function is as follows. Part of the MsrPQ system that repairs oxidized periplasmic proteins containing methionine sulfoxide residues (Met-O), using respiratory chain electrons. Thus protects these proteins from oxidative-stress damage caused by reactive species of oxygen and chlorine generated by the host defense mechanisms. MsrPQ is essential for the maintenance of envelope integrity under bleach stress, rescuing a wide series of structurally unrelated periplasmic proteins from methionine oxidation, including the primary periplasmic chaperone SurA and the lipoprotein Pal. The catalytic subunit MsrP is non-stereospecific, being able to reduce both (R-) and (S-) diastereoisomers of methionine sulfoxide. This Escherichia coli O9:H4 (strain HS) protein is Protein-methionine-sulfoxide reductase catalytic subunit MsrP.